Reading from the N-terminus, the 652-residue chain is Potassium voltage-gated channel subfamily KQT member 1 (652 aa).

Residues 1-110 (MSSEQPAWTF…YNFLERPTGW (110 aa)) lie on the Cytoplasmic side of the membrane. The chain crosses the membrane as a helical span at residues 111-132 (KCFVYHFTVFLIVLICLIFSVL). The Extracellular segment spans residues 133-143 (STIQQYNNLAT). A helical membrane pass occupies residues 144-166 (ETLFWMEIVLVVFFGAEYVVRLW). Residues 167–182 (SAGCRSKYVGVWGRLR) lie on the Cytoplasmic side of the membrane. The chain crosses the membrane as a helical span at residues 183–208 (FARKPISVIDLIVVVASVIVLCVGSN). Over 209–216 (GQVFATSA) the chain is Extracellular. Residues 217 to 232 (IRGIRFLQILRMLHVD) form a helical; Voltage-sensor membrane-spanning segment. The tract at residues 228–236 (MLHVDRQGG) is interaction with KCNE3. Over 233–250 (RQGGTWRLLGSVVFIHRQ) the chain is Cytoplasmic. Q234 is an a 1,2-diacyl-sn-glycero-3-phospho-(1D-myo-inositol-4,5-bisphosphate) binding site. Residues 251-273 (ELITTLYIGFLGLIFSSYFVYLA) form a helical membrane-spanning segment. The Extracellular segment spans residues 274–289 (EKDAIDSSGEYQFGSY). Positions 290-310 (ADALWWGVVTVTTIGYGDKVP) form an intramembrane region, pore-forming. Topologically, residues 311–312 (QT) are extracellular. Residues 313–338 (WIGKTIASCFSVFAISFFALPAGILG) form a helical membrane-spanning segment. Residues 339 to 652 (SGFALKVQQK…VPRMTQDNIS (314 aa)) are Cytoplasmic-facing. Positions 360-372 (AAASLIQTAWRCY) are interaction with CALM. A disordered region spans residues 393-419 (HHLMSPSPKPKKSAMVKKKKIRTERDE). A compositionally biased stretch (basic residues) spans 401–414 (KPKKSAMVKKKKIR). The segment at 504-518 (KVIRRMQYFVAKKKF) is interaction with CALM; calcium-dependent. Positions 524–561 (PYDVRDVIEQYSQGHLNLMVRIKELQRRLDQSLGKPSL) are interaction with KCNE1 C-terminus. The tract at residues 577-605 (IGSRLNRVEDKVTQMDHKLNLITDMLHHL) is interaction with AKAP9. Residues 578–609 (GSRLNRVEDKVTQMDHKLNLITDMLHHLLTNQ) are C-terminal assembly domain (tetramerization). Residues 609 to 652 (QQGSQSIRTPHRSNSLNSENHPSRNTLPTYEQLNVPRMTQDNIS) are disordered.

Belongs to the potassium channel family. KQT (TC 1.A.1.15) subfamily. Kv7.1/KCNQ1 sub-subfamily. Tetramer. Heterotetramer with KCNE1; targets to the membrane raft. Interacts (via C-terminus) with CALM; forms a heterotetramer in a calcium-independent manner. Interacts with KCNE2; form a heterooligomer complex that targets to the membrane raft and leading to currents with an apparently instantaneous activation, a rapid deactivation process and a linear current-voltage relationship and decreases the amplitude of the outward current. Interacts with KCNE3; four KCNE3 molecules are bound to one KCNQ1 tetramer (4:4 KCNQ1:KCNE3 stoichiometry); alters membrane raft localization; affects KCNQ1 structure and gating properties. Interacts with KCNE4; impairs KCNQ1 localization in lipid rafts and inhibits voltage-gated potassium channel activity. Interacts with KCNE5; impairs KCNQ1 localization in lipid rafts and only conducts current upon strong and continued depolarization.

The protein localises to the cell membrane. Its subcellular location is the cytoplasmic vesicle membrane. The protein resides in the membrane raft. It is found in the endoplasmic reticulum. It localises to the basolateral cell membrane. It catalyses the reaction K(+)(in) = K(+)(out). With respect to regulation, PIP2 molecule is essential to activate KCNQ channels by inducing the coupling of the voltage-sensing domain (VSD) and the pore-forming domain (PD). Upon channel activation, PIP2 disrupts the VSD-calmodulin/CALM interactions, causing the release of CALM from the VSD which triggers the opening of the gate. Calcium potentiates KCNQ1 channel current through calcium-bound CALM. Calcium-bound CALM competes with PIP2 to stabilize the channel open state. Pore-forming subunit of the voltage-gated potassium (Kv) channel involved in the regulation of cardiomyocyte excitability and important in normal development and functions of myocardium, inner ear, stomach and colon. Associates with KCNE beta subunits that modulates current kinetics. Induces a voltage-dependent by rapidly activating and slowly deactivating potassium-selective outward current. Also promotes a delayed voltage activated potassium current showing outward rectification characteristic. During beta-adrenergic receptor stimulation participates in cardiac repolarization by associating with KCNE1 to form the I(Ks) cardiac potassium current that increases the amplitude and slows down the activation kinetics of outward potassium current I(Ks). When associated with KCNE3, forms the potassium channel that is important for cyclic AMP-stimulated intestinal secretion of chloride ions. When associated with KCNE2, forms a heterooligomer complex leading to currents with an apparently instantaneous activation, a rapid deactivation process and a linear current-voltage relationship and decreases the amplitude of the outward current. When associated with KCNE4, inhibits voltage-gated potassium channel activity. When associated with KCNE5, this complex only conducts current upon strong and continued depolarization. The protein is Potassium voltage-gated channel subfamily KQT member 1 of Xenopus laevis (African clawed frog).